A 513-amino-acid chain; its full sequence is L-arabinose transport ATP-binding protein AraG (513 aa).

2 consecutive ABC transporter domains span residues 6-243 (LEMR…GMVG) and 264-508 (VKNW…TKTA). 38-45 (GENGAGKS) is a binding site for ATP.

It belongs to the ABC transporter superfamily.

The protein resides in the cell membrane. It carries out the reaction L-arabinose(out) + ATP + H2O = L-arabinose(in) + ADP + phosphate + H(+). Functionally, part of the binding-protein-dependent transport system for L-arabinose. Probably responsible for energy coupling to the transport system. The protein is L-arabinose transport ATP-binding protein AraG (araG) of Geobacillus stearothermophilus (Bacillus stearothermophilus).